The sequence spans 193 residues: Cytochrome c biogenesis ATP-binding export protein CcmA (193 aa).

The ABC transporter domain occupies 9 to 191 (LSASGLAILR…AAGFPVTAEV (183 aa)). Residue 41-48 (GANGAGKT) participates in ATP binding.

This sequence belongs to the ABC transporter superfamily. CcmA exporter (TC 3.A.1.107) family. As to quaternary structure, the complex is composed of two ATP-binding proteins (CcmA) and two transmembrane proteins (CcmB).

It is found in the cell inner membrane. The enzyme catalyses heme b(in) + ATP + H2O = heme b(out) + ADP + phosphate + H(+). Its function is as follows. Part of the ABC transporter complex CcmAB involved in the biogenesis of c-type cytochromes; once thought to export heme, this seems not to be the case, but its exact role is uncertain. Responsible for energy coupling to the transport system. The sequence is that of Cytochrome c biogenesis ATP-binding export protein CcmA from Hyphomonas neptunium (strain ATCC 15444).